A 248-amino-acid chain; its full sequence is 2,3-bisphosphoglycerate-dependent phosphoglycerate mutase (248 aa).

Substrate is bound by residues 8-15 (RHGESTWN), 21-22 (TG), arginine 60, 87-90 (ERHY), lysine 98, 114-115 (RR), and 183-184 (GN). Residue histidine 9 is the Tele-phosphohistidine intermediate of the active site. Catalysis depends on glutamate 87, which acts as the Proton donor/acceptor.

Belongs to the phosphoglycerate mutase family. BPG-dependent PGAM subfamily. In terms of assembly, homodimer.

It catalyses the reaction (2R)-2-phosphoglycerate = (2R)-3-phosphoglycerate. Its pathway is carbohydrate degradation; glycolysis; pyruvate from D-glyceraldehyde 3-phosphate: step 3/5. In terms of biological role, catalyzes the interconversion of 2-phosphoglycerate and 3-phosphoglycerate. The protein is 2,3-bisphosphoglycerate-dependent phosphoglycerate mutase of Burkholderia cenocepacia (strain ATCC BAA-245 / DSM 16553 / LMG 16656 / NCTC 13227 / J2315 / CF5610) (Burkholderia cepacia (strain J2315)).